The chain runs to 943 residues: 2-oxoglutarate dehydrogenase E1 component (943 aa).

The protein belongs to the alpha-ketoglutarate dehydrogenase family. As to quaternary structure, homodimer. Part of the 2-oxoglutarate dehydrogenase (OGDH) complex composed of E1 (2-oxoglutarate dehydrogenase), E2 (dihydrolipoamide succinyltransferase) and E3 (dihydrolipoamide dehydrogenase); the complex contains multiple copies of the three enzymatic components (E1, E2 and E3). Requires thiamine diphosphate as cofactor.

It catalyses the reaction N(6)-[(R)-lipoyl]-L-lysyl-[protein] + 2-oxoglutarate + H(+) = N(6)-[(R)-S(8)-succinyldihydrolipoyl]-L-lysyl-[protein] + CO2. Its function is as follows. E1 component of the 2-oxoglutarate dehydrogenase (OGDH) complex which catalyzes the decarboxylation of 2-oxoglutarate, the first step in the conversion of 2-oxoglutarate to succinyl-CoA and CO(2). The sequence is that of 2-oxoglutarate dehydrogenase E1 component from Shouchella clausii (strain KSM-K16) (Alkalihalobacillus clausii).